The chain runs to 329 residues: 4-hydroxythreonine-4-phosphate dehydrogenase (329 aa).

Residues H136 and T137 each contribute to the substrate site. The a divalent metal cation site is built by H166, H211, and H266. The substrate site is built by K274, N283, and R292.

Belongs to the PdxA family. Homodimer. It depends on Zn(2+) as a cofactor. Mg(2+) serves as cofactor. Requires Co(2+) as cofactor.

It is found in the cytoplasm. The enzyme catalyses 4-(phosphooxy)-L-threonine + NAD(+) = 3-amino-2-oxopropyl phosphate + CO2 + NADH. The protein operates within cofactor biosynthesis; pyridoxine 5'-phosphate biosynthesis; pyridoxine 5'-phosphate from D-erythrose 4-phosphate: step 4/5. Functionally, catalyzes the NAD(P)-dependent oxidation of 4-(phosphooxy)-L-threonine (HTP) into 2-amino-3-oxo-4-(phosphooxy)butyric acid which spontaneously decarboxylates to form 3-amino-2-oxopropyl phosphate (AHAP). The protein is 4-hydroxythreonine-4-phosphate dehydrogenase of Shigella sonnei (strain Ss046).